Reading from the N-terminus, the 483-residue chain is Proline--tRNA ligase (483 aa).

It belongs to the class-II aminoacyl-tRNA synthetase family. ProS type 3 subfamily. As to quaternary structure, homodimer.

It is found in the cytoplasm. It carries out the reaction tRNA(Pro) + L-proline + ATP = L-prolyl-tRNA(Pro) + AMP + diphosphate. Catalyzes the attachment of proline to tRNA(Pro) in a two-step reaction: proline is first activated by ATP to form Pro-AMP and then transferred to the acceptor end of tRNA(Pro). The protein is Proline--tRNA ligase of Mycoplasma pneumoniae (strain ATCC 29342 / M129 / Subtype 1) (Mycoplasmoides pneumoniae).